The sequence spans 366 residues: Cyanide hydratase (366 aa).

The region spanning 6–285 is the CN hydrolase domain; sequence YKAAAVTSEP…DGLMFVDIDL (280 aa). E46 acts as the Proton acceptor in catalysis. K128 is an active-site residue. C163 functions as the Nucleophile in the catalytic mechanism.

The protein belongs to the carbon-nitrogen hydrolase superfamily. Nitrilase family. In terms of assembly, oligomer of dimers, forming left-handed helical fibers.

It carries out the reaction formamide = hydrogen cyanide + H2O. Functionally, catalyzes the hydration of cyanide to formamide. Degradation of cyanide may be important for plant pathogenic fungi in infection of cyanogenic plants. Can also transform some nitriles like 2-cyanopyridine and fumaronitrile. In Pyrenophora teres f. teres (strain 0-1) (Barley net blotch fungus), this protein is Cyanide hydratase.